Here is a 48-residue protein sequence, read N- to C-terminus: M-oxotoxin-Ot1a (48 aa).

As to expression, expressed by the venom gland.

The protein localises to the secreted. It is found in the target cell membrane. In terms of biological role, disrupts cell membranes, particularly those rich in phosphocholine, through formation of pores. Has antimicrobial activity against Gram-negative bacterium E.coli, Gram-positive bacteria B.subtilis and S.aureus, and hemolytic activity against sheep, pig and guinea pig erythrocytes. Has insecticidal activity against S.frugiperda ovarian cells by opening non-selective ion channels. Enhances the insecticidal activity of spider venom neurotoxic peptides. The chain is M-oxotoxin-Ot1a from Oxyopes takobius (Lynx spider).